Consider the following 161-residue polypeptide: V-type proton ATPase 16 kDa proteolipid subunit c 2 (161 aa).

The Lumenal segment spans residues 1–15 (MSYDLETAEHAAYAP). A helical membrane pass occupies residues 16–36 (FFGYMGAASAQIFTVLGAAYG). Over 37–58 (TAKSAVGICSMGVMRPELIMKS) the chain is Cytoplasmic. A helical transmembrane segment spans residues 59–79 (VIPVIMAGIIGIYGLVVAMVL). Residues 80–98 (KGKVQAASAGYDLNKGFAH) lie on the Lumenal side of the membrane. The chain crosses the membrane as a helical span at residues 99–119 (LAAGLTCGLCGLGAGYAIGIV). The Cytoplasmic portion of the chain corresponds to 120–137 (GDAGVRGTAQQPRLFVGM). The chain crosses the membrane as a helical span at residues 138-158 (ILILIFSEVLGLYGMIVALIL). Residues 159–161 (GTS) are Lumenal-facing.

The protein belongs to the V-ATPase proteolipid subunit family. V-ATPase is a heteromultimeric enzyme made up of two complexes: the ATP-hydrolytic V1 complex and the proton translocation V0 complex. The V1 complex consists of three catalytic AB heterodimers that form a heterohexamer, three peripheral stalks each consisting of EG heterodimers, one central rotor including subunits D and F, and the regulatory subunits C and H. The proton translocation complex V0 consists of the proton transport subunit a, a ring of proteolipid subunits c9c'', rotary subunit d, subunits e and f, and the accessory subunits vah-19/Ac45 and vah-20/PRR.

Its subcellular location is the membrane. In terms of biological role, proton-conducting pore forming subunit of the V0 complex of vacuolar(H+)-ATPase (V-ATPase), a multisubunit enzyme composed of a peripheral complex (V1) that hydrolyzes ATP and a membrane integral complex (V0) that translocates protons. V-ATPase is responsible for acidifying and maintaining the pH of intracellular compartments and in some cell types, is targeted to the plasma membrane, where it is responsible for acidifying the extracellular environment. Involved in necrotic cell death. Required along with other vacuolar ATPase components for the removal of protein aggregates which form in immature oocytes in the distal gonad. This removal occurs as the oocytes mature and move to the proximal gonad, is triggered by the introduction of sperm through mating and occurs before fertilization. The introduction of sperm triggers V-ATPase accumulation in proximal oocytes and induces lysosomal acidification which leads to engulfing of protein aggregates by lysosomes and subsequent clearance of the aggregates. Lysosomal acidification also leads to changes in mitochondrial morphology and function. Mitochondria in distal immature oocytes are fragmented, produce high levels of reactive oxygen species (ROS) and have high membrane potential, indicative of metabolic inactivity. In contrast, mitochondria in proximal mature oocytes are tubular with lower ROS levels and membrane potential, indicative of an active metabolic state required for aggregate mobilization before clearance. In Caenorhabditis briggsae, this protein is V-type proton ATPase 16 kDa proteolipid subunit c 2.